The sequence spans 230 residues: Lactate utilization protein C (230 aa).

Belongs to the LutC/YkgG family.

Is involved in L-lactate degradation and allows cells to grow with lactate as the sole carbon source. The chain is Lactate utilization protein C from Halalkalibacterium halodurans (strain ATCC BAA-125 / DSM 18197 / FERM 7344 / JCM 9153 / C-125) (Bacillus halodurans).